Here is a 612-residue protein sequence, read N- to C-terminus: Adherence factor (612 aa).

6 stretches are compositionally biased toward low complexity: residues 1 to 18 (MSSF…NLSS), 47 to 68 (SSMM…QQQQ), 94 to 106 (LQTQ…SATT), 115 to 141 (YNQQ…NNMQ), 182 to 203 (QSAQ…QPRS), and 218 to 228 (SRQVSGSGRST). Disordered regions lie at residues 1–20 (MSSF…SSFQ), 46–68 (ASSM…QQQQ), 94–143 (LQTQ…MQFF), 179–273 (PQLQ…NNNK), 443–480 (KEKK…NTNN), 497–527 (SQLM…LSNN), and 546–612 (SQEQ…KQFY). Residues 230–240 (AKKQSAITSGS) are compositionally biased toward polar residues. A compositionally biased stretch (low complexity) spans 254–272 (TSVANSTSTTTMTTTNNNN). Over residues 443–457 (KEKKLTEKTIEQREQ) the composition is skewed to basic and acidic residues. Composition is skewed to polar residues over residues 465-480 (ANHS…NTNN) and 497-512 (SQLM…ATKI). Basic residues predominate over residues 555–571 (NQHHHNHQQHPLIHHHQ). The span at 585–606 (PSTIPTSSLSIQQQQQQQQQQL) shows a compositional bias: low complexity.

Surface antigen mediating adhesion and aggregation in S.cerevisiae. In Candida albicans (strain SC5314 / ATCC MYA-2876) (Yeast), this protein is Adherence factor (ADF1).